A 36-amino-acid chain; its full sequence is Insecticidal toxin LaIT1 (36 aa).

2 disulfide bridges follow: cysteine 11–cysteine 23 and cysteine 17–cysteine 29.

In terms of tissue distribution, expressed by the venom gland.

Its subcellular location is the secreted. Functionally, affects the activity of both ryanodine-sensitive calcium-release channels RyR1 and RyR2 with high potency. At lower concentrations the toxin increases full openings of the RyRs, and at higher concentrations it inhibits full openings and induce openings to subconductance levels and reduces the number of full conductance openings. The different actions may be attributed to the toxins binding at different sites on the RyRs, with binding at a high-affinity site mediating the increase in full openings and the induction of subconductance states evoked upon binding to a lower-affinity site. Shows insect lethality against crickets and common cutworms (only shows paralysis against cockroaches), but no toxicity is observed in mice. The sequence is that of Insecticidal toxin LaIT1 from Liocheles australasiae (Dwarf wood scorpion).